A 642-amino-acid chain; its full sequence is Threonine--tRNA ligase (642 aa).

A TGS domain is found at 1 to 61 (MPVITLPDGS…ETDAELSIIT (61 aa)). A catalytic region spans residues 243-534 (DHRKIGKQLD…LIEEYAGRFP (292 aa)). Zn(2+) is bound by residues C334, H385, and H511.

This sequence belongs to the class-II aminoacyl-tRNA synthetase family. As to quaternary structure, homodimer. It depends on Zn(2+) as a cofactor.

It is found in the cytoplasm. It carries out the reaction tRNA(Thr) + L-threonine + ATP = L-threonyl-tRNA(Thr) + AMP + diphosphate + H(+). Its function is as follows. Catalyzes the attachment of threonine to tRNA(Thr) in a two-step reaction: L-threonine is first activated by ATP to form Thr-AMP and then transferred to the acceptor end of tRNA(Thr). Also edits incorrectly charged L-seryl-tRNA(Thr). This is Threonine--tRNA ligase from Shewanella sp. (strain W3-18-1).